The sequence spans 258 residues: Regulatory protein RecX (258 aa).

The protein belongs to the RecX family.

It localises to the cytoplasm. Functionally, modulates RecA activity. This Streptococcus equi subsp. zooepidemicus (strain MGCS10565) protein is Regulatory protein RecX.